The sequence spans 230 residues: Demethylmenaquinone methyltransferase (230 aa).

S-adenosyl-L-methionine contacts are provided by residues T62, D80, 100–101, and S117; that span reads DG.

Belongs to the class I-like SAM-binding methyltransferase superfamily. MenG/UbiE family.

It carries out the reaction a 2-demethylmenaquinol + S-adenosyl-L-methionine = a menaquinol + S-adenosyl-L-homocysteine + H(+). The protein operates within quinol/quinone metabolism; menaquinone biosynthesis; menaquinol from 1,4-dihydroxy-2-naphthoate: step 2/2. Its function is as follows. Methyltransferase required for the conversion of demethylmenaquinol (DMKH2) to menaquinol (MKH2). This chain is Demethylmenaquinone methyltransferase, found in Corynebacterium efficiens (strain DSM 44549 / YS-314 / AJ 12310 / JCM 11189 / NBRC 100395).